A 395-amino-acid polypeptide reads, in one-letter code: Pesticidal crystal protein Cry6Ba (395 aa).

It belongs to the cry6A endotoxin family.

In terms of biological role, endotoxin with nematicidal activity. The sequence is that of Pesticidal crystal protein Cry6Ba (cry6Ba) from Bacillus thuringiensis.